The following is a 289-amino-acid chain: Oxaloacetate decarboxylase (289 aa).

S50 is a substrate binding site. Mg(2+) is bound at residue D88. The substrate site is built by R159 and H235.

The protein belongs to the isocitrate lyase/PEP mutase superfamily. Oxaloacetate decarboxylase family. As to quaternary structure, homotetramer; dimer of dimers. Mg(2+) serves as cofactor.

It carries out the reaction oxaloacetate + H(+) = pyruvate + CO2. Functionally, catalyzes the decarboxylation of oxaloacetate into pyruvate. Seems to play a role in maintaining cellular concentrations of bicarbonate and pyruvate. The chain is Oxaloacetate decarboxylase from Pseudomonas fluorescens (strain ATCC BAA-477 / NRRL B-23932 / Pf-5).